Consider the following 300-residue polypeptide: Glutamyl-Q tRNA(Asp) synthetase (300 aa).

L-glutamate-binding positions include 8–12 and D44; that span reads RFAPT. The 'HIGH' region signature appears at 11-21; it reads PTPSGDLHLGS. Positions 100, 102, 122, and 126 each coordinate Zn(2+). Residues Y181 and R199 each coordinate L-glutamate. The short motif at 237–241 is the 'KMSKS' region element; the sequence is KLSKQ. Position 240 (K240) interacts with ATP.

It belongs to the class-I aminoacyl-tRNA synthetase family. GluQ subfamily. The cofactor is Zn(2+).

Catalyzes the tRNA-independent activation of glutamate in presence of ATP and the subsequent transfer of glutamate onto a tRNA(Asp). Glutamate is transferred on the 2-amino-5-(4,5-dihydroxy-2-cyclopenten-1-yl) moiety of the queuosine in the wobble position of the QUC anticodon. The protein is Glutamyl-Q tRNA(Asp) synthetase of Synechococcus sp. (strain ATCC 27144 / PCC 6301 / SAUG 1402/1) (Anacystis nidulans).